The following is a 254-amino-acid chain: Putative epimerase LsrE (254 aa).

A helical membrane pass occupies residues 14–34; sequence VALLASYPLSVGILAGQWIAL. A divalent metal cation is bound by residues His50, Asp52, and His81. Asp52 acts as the Proton acceptor in catalysis. Residues His81, 166–169, 199–201, and 221–222 each bind substrate; these read GYGS, DGS, and GS. Asp199 contacts a divalent metal cation. Asp199 functions as the Proton donor in the catalytic mechanism.

This sequence belongs to the ribulose-phosphate 3-epimerase family. The cofactor is a divalent metal cation.

It localises to the cell membrane. The protein is Putative epimerase LsrE (lsrE) of Salmonella choleraesuis (strain SC-B67).